The sequence spans 187 residues: Ribosome-recycling factor (187 aa).

The protein belongs to the RRF family.

It localises to the cytoplasm. In terms of biological role, responsible for the release of ribosomes from messenger RNA at the termination of protein biosynthesis. May increase the efficiency of translation by recycling ribosomes from one round of translation to another. This is Ribosome-recycling factor from Bradyrhizobium sp. (strain BTAi1 / ATCC BAA-1182).